A 123-amino-acid chain; its full sequence is Large ribosomal subunit protein bL12 (123 aa).

This sequence belongs to the bacterial ribosomal protein bL12 family. Homodimer. Part of the ribosomal stalk of the 50S ribosomal subunit. Forms a multimeric L10(L12)X complex, where L10 forms an elongated spine to which 2 to 4 L12 dimers bind in a sequential fashion. Binds GTP-bound translation factors.

In terms of biological role, forms part of the ribosomal stalk which helps the ribosome interact with GTP-bound translation factors. Is thus essential for accurate translation. This Bartonella bacilliformis (strain ATCC 35685 / KC583 / Herrer 020/F12,63) protein is Large ribosomal subunit protein bL12.